The following is a 169-amino-acid chain: General odorant-binding protein 57a (169 aa).

The N-terminal stretch at methionine 1–alanine 20 is a signal peptide. Intrachain disulfides connect cysteine 39–cysteine 77, cysteine 73–cysteine 120, and cysteine 111–cysteine 129.

Belongs to the PBP/GOBP family.

In terms of biological role, present in the aqueous fluid surrounding olfactory sensory dendrites and are thought to aid in the capture and transport of hydrophobic odorants into and through this fluid. This is General odorant-binding protein 57a from Drosophila melanogaster (Fruit fly).